The following is a 126-amino-acid chain: Glycine cleavage system H protein (126 aa).

The region spanning 24–105 (TLTVGITDHA…AYGVWLFKIK (82 aa)) is the Lipoyl-binding domain. An N6-lipoyllysine modification is found at Lys-65.

It belongs to the GcvH family. In terms of assembly, the glycine cleavage system is composed of four proteins: P, T, L and H. (R)-lipoate serves as cofactor.

Its function is as follows. The glycine cleavage system catalyzes the degradation of glycine. The H protein shuttles the methylamine group of glycine from the P protein to the T protein. The sequence is that of Glycine cleavage system H protein from Burkholderia cenocepacia (strain HI2424).